A 251-amino-acid polypeptide reads, in one-letter code: SNAP25 homologous protein SNAP29 (251 aa).

The disordered stretch occupies residues 1–52; that stretch reads MAPKNSSWNPFDDEKEAAKSFSLNPFDDDDDDKEVEKRFTSSLKPSGGKENQ. A compositionally biased stretch (polar residues) spans 40–52; it reads TSSLKPSGGKENQ. The region spanning 186–248 is the t-SNARE coiled-coil homology domain; the sequence is KTQIAKQDEA…KQSNQRARYL (63 aa).

It belongs to the SNAP-25 family.

Its subcellular location is the membrane. The protein localises to the cytoplasm. In terms of biological role, SNAREs, soluble N-ethylmaleimide-sensitive factor-attachment protein receptors, are essential proteins for fusion of cellular membranes. SNAREs localized on opposing membranes assemble to form a trans-SNARE complex, an extended, parallel four alpha-helical bundle that drives membrane fusion. This is SNAP25 homologous protein SNAP29 (SNAP29) from Arabidopsis thaliana (Mouse-ear cress).